Consider the following 203-residue polypeptide: Ras-like protein family member 10A (203 aa).

The tract at residues 1 to 203 (MGGSLRVAVL…ALHPARCSLM (203 aa)) is small GTPase-like. 11 to 18 (GAPGVGKT) provides a ligand contact to GTP. The Effector region signature appears at 33–42 (HRPTDGPRLY). Residues 59–62 (DGDV) and 129–132 (NKRD) contribute to the GTP site. Cys200 bears the Cysteine methyl ester mark. Cys200 carries S-farnesyl cysteine lipidation. Residues 201 to 203 (SLM) constitute a propeptide, removed in mature form.

This sequence belongs to the small GTPase superfamily. Ras family. Post-translationally, isoprenylation is essential for nucleolar localization, and the proliferation-inhibiting activity of RASL10A. In terms of tissue distribution, expression appears to be strictly limited to the central nervous system.

It is found in the cell membrane. The protein localises to the nucleus. The protein resides in the nucleolus. The catalysed reaction is GTP + H2O = GDP + phosphate + H(+). Potent inhibitor of cellular proliferation. This is Ras-like protein family member 10A (RASL10A) from Homo sapiens (Human).